The primary structure comprises 1529 residues: MAFAGVGQGIGTYDRTEQASGAPLGRVTSRAHFTDIHPSDDLPAQTEENRAREVGHLARQLTRQSVTVTDDSTDVFSYQEGSDLDPFSDKFNAKKWTKLMFEAVQTCGPARKAGLSFRNLGVHGFGSDADYQKTVGNLPLVGIGSLRDLIGNRKRKVQILNSMDGVLEAGEMLVVLGPPGSGCTTMLKTIAGEMNGIYLDESSSLNYRGITPKEIYGQFRGEAIYTAEVDIHFPNLTVGQTLSFAAEARAPRNPPGGISKKEYAKHMRDVVMSVFGISHTLNTIVGNDFVRGVSGGERKRVTIAEASLAGAPLQCWDNSTRGLDSANAIEFCKNLRLNADYMGISSAVAIYQAPQSAYDCFDKVSVLYEGEQIFFGKTTDAKQFFVDMGFHCPSQQTVPDFLTSLTSPSERRPREGFEGKVPTTPQEFAARWKQSDKYQELLAQIAEFENKYPVHGEKYREFLESRRAQQSKHLRSKSPYTLSYGGQVELCLRRGFDRLRADPSLTLTQLFGNFIMALIIGSVFYNLPVTTSSFYSRGALLFFAILMSAFGSALEILILYAQRGIVEKHSRYAFYHPSAEAVASALTDIPYKVMNCIIFNLTLYFMTNLRREPGAYFFFMLISFTLTMVMSMLFRSIASLSRSLTQALAPAALLILGLVMYTGFAVNVANMRGWARWMNWLDPIAYGFESLMINEFHGREYECSTFVPMGPGYEDATGQQHVCSTAGAVAGSSVVNGDAYINLSYEYYHAHKWRNFGILIGFFLFFTAIYLTATEFITAKKSKGEILVFPRGKIPHALLAQSTHSHGSSDDVEGGKFAGGSNMKKEITGADRANAGIIQKQTAIFSWKDVVYDIKIKKEPRRILDHVDGWVKPGTLTALMGVSGAGKTTLLDVLATRVTMGVVTGEMLVDGKQRDLSFQRKTGYVQQQDLHLETSTVREALRFSAILRQPNTVSIKEKYEYVEEVLKLLEMDGYADAVVGVPGTGLNVEQRKRLTIGVELVAKPALLLFLDEPTSGLDSQTSWNILLLLRKLTEHGQAILCTIHQPSAMLFEQFDRLLFLARGGKTVYFGEVGKGSRILIDYFEKNGASKCPEGENPAEWMLAAIGAAPGSHSEVDWHQTWINSPERIEVRSELARIKETQGGKGEAALQNKDYEKSKAEVKAEYAEFASPLWKQFIVVLMRVWQQHWRTPSYIWAKVALCSLSGLFIGFSFFKAGTSQQGLQNQLFSVFMMFTIFGQLTQQIMPNFVTQRSLYEVRERPSKTYSWKIFILSNIVSEIPWAILMGVIIYFTWYYPIGYYRNAIPEDAVHLRGALMFLYIEMFLLFNATFSIMIVAGIATAETAGNIANLLFSMCLIFCGVLASGSSLPGFWVFMYRVSPFTYLVEGMLSVAVANTDVVCSDIEFLTFNPPSGQSCGDYMSTFITNYGGYLVDENATTACEFCSMSKTNTFLAQFDIYYSNKWRDFGLLWVYVVFNVIAAIGIYWLARVPKNTGKERASEPEDVQEKQVPAQSTEKKYQSISRSSESTVA.

Residues 144-394 (GSLRDLIGNR…FVDMGFHCPS (251 aa)) enclose the ABC transporter 1 domain. Asn-235 and Asn-318 each carry an N-linked (GlcNAc...) asparagine glycan. The next 5 helical transmembrane spans lie at 510 to 530 (LFGNFIMALIIGSVFYNLPVT), 539 to 559 (ALLFFAILMSAFGSALEILIL), 589 to 609 (IPYKVMNCIIFNLTLYFMTNL), 614 to 634 (GAYFFFMLISFTLTMVMSMLF), and 648 to 668 (LAPAALLILGLVMYTGFAVNV). A glycan (N-linked (GlcNAc...) asparagine) is linked at Asn-742. A helical transmembrane segment spans residues 757–777 (GILIGFFLFFTAIYLTATEFI). Positions 845 to 1087 (FSWKDVVYDI…ILIDYFEKNG (243 aa)) constitute an ABC transporter 2 domain. ATP is bound at residue 881-888 (GVSGAGKT). A run of 5 helical transmembrane segments spans residues 1193–1213 (YIWAKVALCSLSGLFIGFSFF), 1229–1249 (VFMMFTIFGQLTQQIMPNFVT), 1268–1288 (IFILSNIVSEIPWAILMGVII), 1314–1334 (LMFLYIEMFLLFNATFSIMIV), and 1353–1373 (MCLIFCGVLASGSSLPGFWVF). Asn-1434 carries N-linked (GlcNAc...) asparagine glycosylation. A helical transmembrane segment spans residues 1465 to 1485 (FGLLWVYVVFNVIAAIGIYWL). Over residues 1493–1505 (GKERASEPEDVQE) the composition is skewed to basic and acidic residues. A disordered region spans residues 1493 to 1529 (GKERASEPEDVQEKQVPAQSTEKKYQSISRSSESTVA). The span at 1518–1529 (QSISRSSESTVA) shows a compositional bias: polar residues.

Belongs to the ABC transporter superfamily. ABCG family. PDR (TC 3.A.1.205) subfamily.

The protein localises to the cell membrane. It carries out the reaction itraconazole(in) + ATP + H2O = itraconazole(out) + ADP + phosphate + H(+). It catalyses the reaction voriconazole(in) + ATP + H2O = voriconazole(out) + ADP + phosphate + H(+). The catalysed reaction is fluconazole(in) + ATP + H2O = fluconazole(out) + ADP + phosphate + H(+). Pleiotropic ABC efflux transporter that confers resistance to structurally and functionally unrelated compounds including azoles such as fluconazole (FLC), itraconazole (ITC), posaconazole (POS), and voriconazole (VRC). The chain is ABC multidrug transporter AFR2 from Cryptococcus deuterogattii (strain R265) (Cryptococcus gattii VGII (strain R265)).